The chain runs to 371 residues: Regulatory protein RapK (371 aa).

TPR repeat units lie at residues 7–42 (EVVATTLNDWYIAIKKQKVDESIKYYSEIKKLFDEM), 93–130 (EYNFYLFEAMYEAYNKNYDRAINLYGLAEKKLAEIPDE), 175–208 (ATSTMIAAANYADMKRFEEAEQYYLEAIDIAKET), 215–248 (AQLFHNLSIVYSDWNKPDKCIESLEKAIGNESWL), 254–290 (INSLFMMIKELFKIDEKMKAINFYNKAQERLILMENK), and 331–364 (DELSYIAAKRFESIGAFEEATSFFNAKIWAEQKM).

The protein belongs to the Rap family.

Its subcellular location is the cytoplasm. With respect to regulation, inhibited by PhrK, which prevents RapK-ComA interaction. In terms of biological role, involved in the regulation of genetic competence development. Inhibits the activity of ComA, a transcriptional factor that regulates the development of genetic competence. Likely affects the activity of additional regulators, in particular Spo0A. This chain is Regulatory protein RapK (rapK), found in Bacillus subtilis (strain 168).